The chain runs to 413 residues: Tubby-like F-box protein 6 (413 aa).

Positions 67–122 (SIWVDLPPELLLDIIQRIESEQSLWPGRRDVVACASVCKSWREMTKEVVKVPELSG) constitute an F-box domain.

This sequence belongs to the TUB family. As to expression, ubiquitous, with higher levels in flowers.

This is Tubby-like F-box protein 6 from Arabidopsis thaliana (Mouse-ear cress).